A 373-amino-acid chain; its full sequence is 4-hydroxy-3-methylbut-2-en-1-yl diphosphate synthase (flavodoxin) (373 aa).

Positions 270, 273, 305, and 312 each coordinate [4Fe-4S] cluster.

This sequence belongs to the IspG family. The cofactor is [4Fe-4S] cluster.

It carries out the reaction (2E)-4-hydroxy-3-methylbut-2-enyl diphosphate + oxidized [flavodoxin] + H2O + 2 H(+) = 2-C-methyl-D-erythritol 2,4-cyclic diphosphate + reduced [flavodoxin]. Its pathway is isoprenoid biosynthesis; isopentenyl diphosphate biosynthesis via DXP pathway; isopentenyl diphosphate from 1-deoxy-D-xylulose 5-phosphate: step 5/6. Converts 2C-methyl-D-erythritol 2,4-cyclodiphosphate (ME-2,4cPP) into 1-hydroxy-2-methyl-2-(E)-butenyl 4-diphosphate. The protein is 4-hydroxy-3-methylbut-2-en-1-yl diphosphate synthase (flavodoxin) of Klebsiella pneumoniae (strain 342).